The chain runs to 346 residues: Ion-translocating oxidoreductase complex subunit D (346 aa).

Helical transmembrane passes span 20-40 (IMIQVMLACLPGLMALTTFFG), 42-62 (GIIIQLVIACVTALVAEGVVL), 69-91 (LASRLGDGSALLTALLLALSLPP), and 120-140 (PFNPAMVGYVVLLISFPVQMT). T187 carries the FMN phosphoryl threonine modification. Helical transmembrane passes span 212-232 (ASAGWTWANIGFLLGGLYLIW), 242-262 (LSLLAAMLIGAGLGHWLAPVV), 264-284 (APPLLHLFSGATMLGAFFIAT), 290-310 (AATVRGRVIFGALTGLLVWLI), and 314-334 (GGYPDGVAFAVLLANICVPLI).

The protein belongs to the NqrB/RnfD family. As to quaternary structure, the complex is composed of six subunits: RnfA, RnfB, RnfC, RnfD, RnfE and RnfG. FMN serves as cofactor.

It localises to the cell inner membrane. In terms of biological role, part of a membrane-bound complex that couples electron transfer with translocation of ions across the membrane. This is Ion-translocating oxidoreductase complex subunit D from Sodalis glossinidius (strain morsitans).